The sequence spans 248 residues: Triosephosphate isomerase (248 aa).

2 residues coordinate substrate: asparagine 10 and lysine 12. Histidine 95 (electrophile) is an active-site residue. Glutamate 165 serves as the catalytic Proton acceptor.

This sequence belongs to the triosephosphate isomerase family. As to quaternary structure, homodimer.

It carries out the reaction D-glyceraldehyde 3-phosphate = dihydroxyacetone phosphate. The protein operates within carbohydrate biosynthesis; gluconeogenesis. Its pathway is carbohydrate degradation; glycolysis; D-glyceraldehyde 3-phosphate from glycerone phosphate: step 1/1. This is Triosephosphate isomerase (TPI1) from Eremothecium gossypii (strain ATCC 10895 / CBS 109.51 / FGSC 9923 / NRRL Y-1056) (Yeast).